The sequence spans 325 residues: BES1/BZR1 homolog protein 4 (325 aa).

The segment at 1 to 21 is disordered; the sequence is MTSGTRMPTWRERENNKRRER. The required for DNA-binding stretch occupies residues 6-89; it reads RMPTWREREN…RMEIGGGSAT (84 aa). Thr-169 is modified (phosphothreonine). The disordered stretch occupies residues 304 to 325; that stretch reads ERIHEESGSDDLELTLGNSSTR.

This sequence belongs to the BZR/LAT61 family. Phosphorylated. Phosphorylation increases protein degradation.

The polypeptide is BES1/BZR1 homolog protein 4 (BEH4) (Arabidopsis thaliana (Mouse-ear cress)).